The chain runs to 179 residues: Large ribosomal subunit protein uL6 (179 aa).

This sequence belongs to the universal ribosomal protein uL6 family. Part of the 50S ribosomal subunit.

In terms of biological role, this protein binds to the 23S rRNA, and is important in its secondary structure. It is located near the subunit interface in the base of the L7/L12 stalk, and near the tRNA binding site of the peptidyltransferase center. The chain is Large ribosomal subunit protein uL6 from Kineococcus radiotolerans (strain ATCC BAA-149 / DSM 14245 / SRS30216).